The sequence spans 131 residues: Small ribosomal subunit protein uS11 (131 aa).

The protein belongs to the universal ribosomal protein uS11 family. As to quaternary structure, part of the 30S ribosomal subunit. Interacts with proteins S7 and S18. Binds to IF-3.

Functionally, located on the platform of the 30S subunit, it bridges several disparate RNA helices of the 16S rRNA. Forms part of the Shine-Dalgarno cleft in the 70S ribosome. The polypeptide is Small ribosomal subunit protein uS11 (Geobacter sulfurreducens (strain ATCC 51573 / DSM 12127 / PCA)).